A 492-amino-acid chain; its full sequence is E1B 55 kDa protein (492 aa).

Residues 22-112 (ENMEGSQDED…ERNPSGNNSR (91 aa)) are disordered. The span at 34–44 (RLLASAASGSS) shows a compositional bias: low complexity. Residues S486 and S487 each carry the phosphoserine modification. T491 bears the Phosphothreonine mark.

This sequence belongs to the adenoviridae E1B 55 kDa protein family. As to quaternary structure, interacts with host PML-4 and PML-5; this interaction promotes efficient subnuclear targeting of E1B-55K to PML nuclear bodies. Interacts with E4-ORF3 protein. Interacts with E4-ORF6 protein.

The protein localises to the host nucleus. It localises to the host cytoplasm. Plays a major role to prevent cellular inhibition of viral genome replication. Assembles an SCF-like E3 ubiquitin ligase complex based on the cellular proteins ELOB, ELOC, CUL5 and RBX1, in cooperation with viral E4orf6. This viral RING-type ligase ubiquitinates cellular substrates and targets them to proteasomal degradation: TP53/p53, LIG4, MRE11-RAD50-NBS1 (MRN) complex, ITGA3, DAXX and BLM. E1B-55K probably acts as the substrate-specific adapter of the SCF-like E3 ubiquitin ligase complex. Degradation of host TP53/p53 activity is essential for preventing E1A-induced TP53 accumulation that would otherwise lead to cell apoptosis and growth arrest. E1B-55K also inactivates TP53 transcription-factor activity by binding its transactivation domain. E1B-55K also functions as a SUMO1 E3 ligase for TP53 which causes the latter to be sequestered in promyelocytic leukemia (PML) nuclear bodies thereby contributing to maximal inhibition of TP53 function. In Human adenovirus B serotype 7 (HAdV-7), this protein is E1B 55 kDa protein.